A 319-amino-acid polypeptide reads, in one-letter code: MGQGLWRVARNQQLQQEGYGEQGYLSREQSRRVAASNMSHTSHRKHVQGGIDIYHLLKTRKSKEQEGFINLEMLPPELSFTILSYLNATDLCLASCVWQDLANDELLWQGLCKSTWGHCSIYNKNPPLGFSFRKLYMQLDEGSLTFNANPDEGVNYFMSKGILDDSPKEIAKFIFCTRTLNWKKLRIYLDERRDVLDDLVTLHNFRNQFLPNALREFFRHIHAPEERGEYLETLITKFSHRFCACNPDLMRELGLSPDAVYVLCYSLILLSIDLTSPHVKNKMSKREFIRNTRRAAQNISEDFVGHLYDNIYLIGHVAA.

The 44-residue stretch at 68–111 folds into the F-box domain; that stretch reads FINLEMLPPELSFTILSYLNATDLCLASCVWQDLANDELLWQGL. In terms of domain architecture, SEC7 spans 146–276; it reads FNANPDEGVN…LILLSIDLTS (131 aa).

Functionally, may promote guanine-nucleotide exchange on an ARF. Promotes the activation of ARF through replacement of GDP with GTP (Potential). The sequence is that of F-box only protein 8 (FBXO8) from Bos taurus (Bovine).